We begin with the raw amino-acid sequence, 572 residues long: 2-hydroxyacyl-CoA lyase (572 aa).

Alanine 2 carries the N-acetylalanine modification. Glutamate 58 lines the thiamine diphosphate pocket. The thiamine pyrophosphate binding stretch occupies residues 407–488; it reads TMDVGRSVLV…IIVFNNGGVY (82 aa). Mg(2+) is bound by residues aspartate 457 and asparagine 484.

The protein belongs to the TPP enzyme family. Homotetramer. Mg(2+) is required as a cofactor. The cofactor is thiamine diphosphate.

The enzyme catalyses an (R)-2-hydroxy-long-chain-fatty acyl-CoA = a long-chain fatty aldehyde + formyl-CoA. The catalysed reaction is a 2-hydroxy-3-methyl fatty acyl-CoA = a 2-methyl-branched fatty aldehyde + formyl-CoA. Its function is as follows. Catalyzes a carbon-carbon cleavage reaction; cleaves a 2-hydroxy-3-methylacyl-CoA into formyl-CoA and a 2-methyl-branched fatty aldehyde. The sequence is that of 2-hydroxyacyl-CoA lyase (HACL) from Arabidopsis thaliana (Mouse-ear cress).